The primary structure comprises 189 residues: Peptidyl-tRNA hydrolase (189 aa).

TRNA is bound at residue Y15. H20 acts as the Proton acceptor in catalysis. Y64, N66, and N112 together coordinate tRNA.

It belongs to the PTH family. Monomer.

It is found in the cytoplasm. It catalyses the reaction an N-acyl-L-alpha-aminoacyl-tRNA + H2O = an N-acyl-L-amino acid + a tRNA + H(+). Functionally, hydrolyzes ribosome-free peptidyl-tRNAs (with 1 or more amino acids incorporated), which drop off the ribosome during protein synthesis, or as a result of ribosome stalling. Catalyzes the release of premature peptidyl moieties from peptidyl-tRNA molecules trapped in stalled 50S ribosomal subunits, and thus maintains levels of free tRNAs and 50S ribosomes. The polypeptide is Peptidyl-tRNA hydrolase (Sulfurihydrogenibium sp. (strain YO3AOP1)).